We begin with the raw amino-acid sequence, 148 residues long: UPF0260 protein ESA_01462 (148 aa).

The protein belongs to the UPF0260 family.

The sequence is that of UPF0260 protein ESA_01462 from Cronobacter sakazakii (strain ATCC BAA-894) (Enterobacter sakazakii).